The chain runs to 473 residues: tRNA-2-methylthio-N(6)-dimethylallyladenosine synthase (473 aa).

The 118-residue stretch at 3-120 (MKLHVKTWGC…LPEMIKEVQE (118 aa)) folds into the MTTase N-terminal domain. [4Fe-4S] cluster-binding residues include Cys12, Cys49, Cys83, Cys157, Cys161, and Cys164. Positions 143 to 375 (KADGATAFVS…QDRIQQQSQG (233 aa)) constitute a Radical SAM core domain. The TRAM domain maps to 378 to 441 (RKMVGSVQRI…TNSIRGKFIR (64 aa)).

This sequence belongs to the methylthiotransferase family. MiaB subfamily. In terms of assembly, monomer. [4Fe-4S] cluster is required as a cofactor.

The protein localises to the cytoplasm. It carries out the reaction N(6)-dimethylallyladenosine(37) in tRNA + (sulfur carrier)-SH + AH2 + 2 S-adenosyl-L-methionine = 2-methylsulfanyl-N(6)-dimethylallyladenosine(37) in tRNA + (sulfur carrier)-H + 5'-deoxyadenosine + L-methionine + A + S-adenosyl-L-homocysteine + 2 H(+). In terms of biological role, catalyzes the methylthiolation of N6-(dimethylallyl)adenosine (i(6)A), leading to the formation of 2-methylthio-N6-(dimethylallyl)adenosine (ms(2)i(6)A) at position 37 in tRNAs that read codons beginning with uridine. This Psychromonas ingrahamii (strain DSM 17664 / CCUG 51855 / 37) protein is tRNA-2-methylthio-N(6)-dimethylallyladenosine synthase.